The following is an 81-amino-acid chain: Photosystem I iron-sulfur center (81 aa).

4Fe-4S ferredoxin-type domains lie at 2–31 (AHTVKIYDTCIGCTQCVRACPTDVLEMVPW) and 37–68 (GQIASSPRTEDCVGCKRCETACPTDFLSIRVY). Residues Cys11, Cys14, Cys17, Cys21, Cys48, Cys51, Cys54, and Cys58 each contribute to the [4Fe-4S] cluster site.

In terms of assembly, the cyanobacterial PSI reaction center is composed of one copy each of PsaA,B,C,D,E,F,I,J,K,L,M and X, and forms trimeric complexes. The cofactor is [4Fe-4S] cluster.

Its subcellular location is the cellular thylakoid membrane. It carries out the reaction reduced [plastocyanin] + hnu + oxidized [2Fe-2S]-[ferredoxin] = oxidized [plastocyanin] + reduced [2Fe-2S]-[ferredoxin]. Its function is as follows. Apoprotein for the two 4Fe-4S centers FA and FB of photosystem I (PSI); essential for photochemical activity. FB is the terminal electron acceptor of PSI, donating electrons to ferredoxin. The C-terminus interacts with PsaA/B/D and helps assemble the protein into the PSI complex. Required for binding of PsaD and PsaE to PSI. PSI is a plastocyanin/cytochrome c6-ferredoxin oxidoreductase, converting photonic excitation into a charge separation, which transfers an electron from the donor P700 chlorophyll pair to the spectroscopically characterized acceptors A0, A1, FX, FA and FB in turn. The polypeptide is Photosystem I iron-sulfur center (psaC) (Synechococcus elongatus).